The sequence spans 524 residues: Beta-glucosidase 23 (524 aa).

A signal peptide spans 1-24 (MVLQKLPLIGLLLLLTIVASPANA). Glutamine 54 is an a beta-D-glucoside binding site. N-linked (GlcNAc...) asparagine glycosylation is present at asparagine 60. Residues histidine 157 and 202 to 203 (NE) contribute to the a beta-D-glucoside site. Glutamate 203 (proton donor) is an active-site residue. Cysteine 222 and cysteine 230 are joined by a disulfide. 2 residues coordinate a beta-D-glucoside: tyrosine 346 and glutamate 418. Glutamate 418 functions as the Nucleophile in the catalytic mechanism. Asparagine 461 carries an N-linked (GlcNAc...) asparagine glycan. Residues tryptophan 468, 475-476 (EW), and phenylalanine 484 contribute to the a beta-D-glucoside site. N-linked (GlcNAc...) asparagine glycosylation occurs at asparagine 494. Positions 521–524 (KDEL) match the Prevents secretion from ER motif.

Belongs to the glycosyl hydrolase 1 family. As to quaternary structure, homodimers. Binds to the deubiquitinating enzyme AMSH3. The inactive form interacts with PBP1/JAL30 to form the PYK10 complex, at least composed of PYK10/BGLU23, BGLU21, BGLU22, JAL22, JAL23, PBP1/JAL30, PBP2/JAL31, JAL32, JAL33, JAL34, JAL35, GLL22 and GLL23. In terms of processing, forms interchain disulfide bonds. As to expression, expressed exclusively in roots.

Its subcellular location is the endoplasmic reticulum lumen. The catalysed reaction is Hydrolysis of terminal, non-reducing beta-D-glucosyl residues with release of beta-D-glucose.. Its activity is regulated as follows. Activated by tissue damage and upon binding to PBP1 or PBP2. Beta-D-glucosidase active on scopolin &gt; esculin &gt;&gt; 4-MU-glucoside &gt;&gt; DIMBOA-glucoside. No activity with pNP-glucoside, oNP-glucoside and sinigrin as substrates. May possess beta-D-fucosidase activity. Required for the beneficial interaction with the endophytic fungus P.indica. May participate in the control of root colonization by P.indica by repressing defense responses and modulating other responses required for a mutualistic interaction. The sequence is that of Beta-glucosidase 23 from Arabidopsis thaliana (Mouse-ear cress).